Reading from the N-terminus, the 465-residue chain is tRNA modification GTPase MnmE (465 aa).

(6S)-5-formyl-5,6,7,8-tetrahydrofolate contacts are provided by Arg30, Glu92, and Arg132. The TrmE-type G domain occupies 227 to 388 (GLQVALVGRP…LIEAVLKTCG (162 aa)). A K(+)-binding site is contributed by Asn237. GTP is bound by residues 237–242 (NVGKSS), 256–262 (TDLPGTT), 281–284 (DTAG), and 342–345 (NKAD). Position 241 (Ser241) interacts with Mg(2+). Positions 256, 258, and 261 each coordinate K(+). Thr262 provides a ligand contact to Mg(2+). Position 465 (Lys465) interacts with (6S)-5-formyl-5,6,7,8-tetrahydrofolate.

The protein belongs to the TRAFAC class TrmE-Era-EngA-EngB-Septin-like GTPase superfamily. TrmE GTPase family. In terms of assembly, homodimer. Heterotetramer of two MnmE and two MnmG subunits. K(+) serves as cofactor.

The protein localises to the cytoplasm. Functionally, exhibits a very high intrinsic GTPase hydrolysis rate. Involved in the addition of a carboxymethylaminomethyl (cmnm) group at the wobble position (U34) of certain tRNAs, forming tRNA-cmnm(5)s(2)U34. In Prochlorococcus marinus (strain MIT 9303), this protein is tRNA modification GTPase MnmE.